The primary structure comprises 392 residues: ESX-1 secretion-associated protein EspA (392 aa).

The tract at residues 302-392 (TRQALRPRAD…GQKVLVRNVV (91 aa)) is disordered. Gly residues predominate over residues 334–344 (QGMGGPVGMGG).

As to quaternary structure, homodimer; disulfide-linked. An artificial EsxB-EsxA heterodimer interacts with EspA.

The protein resides in the secreted. Its function is as follows. Required for secretion of EsxA (ESAT-6) and EsxB (CFP-10) and for virulence. Involved in translocation of bacteria from the host (human) phagolysosome to the host cytoplasm. The protein is ESX-1 secretion-associated protein EspA of Mycobacterium tuberculosis (strain ATCC 25618 / H37Rv).